A 130-amino-acid polypeptide reads, in one-letter code: Mitochondrial import protein 1 (130 aa).

The interval 1-41 (MSAEEISNPLAESGVTISSDSEQYSAPESASPQSPSSSSPA) is disordered. The segment covering 15–24 (VTISSDSEQY) has biased composition (polar residues). The segment covering 25–41 (SAPESASPQSPSSSSPA) has biased composition (low complexity).

The protein belongs to the MIM1 family.

Its subcellular location is the mitochondrion outer membrane. Its function is as follows. Required for the assembly of the TOM (translocase of outer membrane) receptor complex, which is responsible for the recognition and translocation of cytosolically synthesized mitochondrial preproteins. The sequence is that of Mitochondrial import protein 1 from Neurospora crassa (strain ATCC 24698 / 74-OR23-1A / CBS 708.71 / DSM 1257 / FGSC 987).